The chain runs to 309 residues: UPF0252 protein PH0672 (309 aa).

A run of 2 helical transmembrane segments spans residues 5–25 (SVII…NESI) and 106–126 (AVLT…LMIF).

It belongs to the UPF0252 family.

It localises to the cell membrane. The sequence is that of UPF0252 protein PH0672 from Pyrococcus horikoshii (strain ATCC 700860 / DSM 12428 / JCM 9974 / NBRC 100139 / OT-3).